A 541-amino-acid chain; its full sequence is MGCIKSKENKSPAIKYTPENPTEPVNTSAGHYGVEHATAATTSSTKGASANFNSLSMTPFGGSSGVTPFGGASSSFSVVPSSYPTSLTGGVTIFVALYDYEARTTEDLSFKKGERFQIINNTEGDWWEARSIATGKNGYIPSNYVAPADSIQAEEWYFGKMGRKDAERLLLNPGNQRGIFLVRESETTKGAYSLSIRDWDEVRGDNVKHYKIRKLDNGGYYITTRAQFDTLQKLVKHYTEHADGLCHKLTTVCPTVKPQTQGLAKDAWEIPRESLRLEVKLGQGCFGEVWMGTWNGTTKVAIKTLKPGTMMPEAFLQEAQIMKKLRHDKLVPLYAVVSEEPIYIVTEFMSKGILLDFLKEGDGKYLKLPQLVDMAAQIADGMAYIERMNYIHRDLRAANILVGENLVCKIADFGLARLIEDNEYTARQGAKFPIKWTAPEAALYGRFTIKSDVWSFGILQTELVTKGRVPYPGMVNREVLEQVERGYRMPCPQGCPESLHELMNLCWKKDPDERPTFEYIQSFLEDYFTATEPQYQPGENL.

Basic and acidic residues predominate over residues 1–10 (MGCIKSKENK). The interval 1–29 (MGCIKSKENKSPAIKYTPENPTEPVNTSA) is disordered. A lipid anchor (N-myristoyl glycine) is attached at glycine 2. Cysteine 3 carries the S-palmitoyl cysteine; in membrane form lipid modification. The segment covering 19 to 29 (ENPTEPVNTSA) has biased composition (polar residues). The residue at position 32 (tyrosine 32) is a Phosphotyrosine. An SH3 domain is found at 89–150 (GGVTIFVALY…PSNYVAPADS (62 aa)). The SH2 domain maps to 156–253 (WYFGKMGRKD…GLCHKLTTVC (98 aa)). The 254-residue stretch at 275-528 (LRLEVKLGQG…YIQSFLEDYF (254 aa)) folds into the Protein kinase domain. ATP is bound by residues 281–289 (LGQGCFGEV) and lysine 303. 2 positions are modified to phosphotyrosine: tyrosine 334 and tyrosine 343. Aspartate 394 (proton acceptor) is an active-site residue. Phosphotyrosine; by autocatalysis is present on tyrosine 424. Tyrosine 535 bears the Phosphotyrosine mark.

As to quaternary structure, interacts with YAP1 and CSF1R. Interacts with FASLG. Interacts with CTNND1; this interaction allows YES1-mediated activation of FYN and FER and subsequent phosphorylation of CTNND1. Interacts with IL6ST/gp130. Interacts with SCRIB, when YES1 is in a closed conformation; the interaction facilitates YES1 autophosphorylation. Post-translationally, phosphorylated. Phosphorylation by CSK on the C-terminal tail maintains the enzyme in an inactive state. Autophosphorylation at Tyr-424 maintains enzyme activity by blocking CSK-mediated inhibition. Palmitoylation at Cys-3 promotes membrane localization.

Its subcellular location is the cell membrane. It localises to the cytoplasm. The protein resides in the cytoskeleton. It is found in the microtubule organizing center. The protein localises to the centrosome. Its subcellular location is the cytosol. It localises to the cell junction. The enzyme catalyses L-tyrosyl-[protein] + ATP = O-phospho-L-tyrosyl-[protein] + ADP + H(+). In terms of biological role, non-receptor protein tyrosine kinase that is involved in the regulation of cell growth and survival, apoptosis, cell-cell adhesion, cytoskeleton remodeling, and differentiation. Stimulation by receptor tyrosine kinases (RTKs) including EGFR, PDGFR, CSF1R and FGFR leads to recruitment of YES1 to the phosphorylated receptor, and activation and phosphorylation of downstream substrates. Upon EGFR activation, promotes the phosphorylation of PARD3 to favor epithelial tight junction assembly. Participates in the phosphorylation of specific junctional components such as CTNND1 by stimulating the FYN and FER tyrosine kinases at cell-cell contacts. Upon T-cell stimulation by CXCL12, phosphorylates collapsin response mediator protein 2/DPYSL2 and induces T-cell migration. Participates in CD95L/FASLG signaling pathway and mediates AKT-mediated cell migration. Plays a role in cell cycle progression by phosphorylating the cyclin dependent kinase 4/CDK4 thus regulating the G1 phase. Also involved in G2/M progression and cytokinesis. Catalyzes phosphorylation of organic cation transporter OCT2 which induces its transport activity. In Rattus norvegicus (Rat), this protein is Tyrosine-protein kinase Yes (Yes1).